The sequence spans 447 residues: DILAAFRVTPQPGVPPEEAGAAVAXESSTGTWTTVWTDGLTSLDRYKGRCYHIEPVPGEADQYICYVAYPLDLFEEGSVTNMFTSIVGNVFGFKALRALRLEDLRXPTAYIKTFQGPPHGIQVERDKLNKYGRPLLGCTIKPKLGLSAKNYGRAVFECLRGGLDFTKDDENVNSQPFMRWRDRFLFCAEALYKSQAETGEIKGHYLNATAGTCEEMIKRAVFARELGAPIVMHDYLTGGFTANTSLAHYCRDNGLLLHIHRAMHAVIDRQKNHGIHFRVLAKALRMSGGDHIHSGTVVGKLEGERDITLGFVDLLRDDFIEKDRSRGIYFTQDWVSLPGVLPVASGGIHVWHMPALTEIFGDDSVLQFGGGTLGHPWGNAPGAVANRVALEACVQARNEGRDLASEGNEIIREASKWSPELAAACEVWKEIKFEFQAMDTLDPSSDK.

Substrate is bound by residues Asn-89 and Thr-139. The active-site Proton acceptor is the Lys-141. Lys-143 is a substrate binding site. Lys-167, Asp-169, and Glu-170 together coordinate Mg(2+). Lys-167 carries the N6-carboxylysine modification. His-260 (proton acceptor) is an active-site residue. Arg-261, His-293, and Ser-345 together coordinate substrate.

The protein belongs to the RuBisCO large chain family. Type I subfamily. As to quaternary structure, heterohexadecamer of 8 large chains and 8 small chains; disulfide-linked. The disulfide link is formed within the large subunit homodimers. Mg(2+) serves as cofactor. The disulfide bond which can form in the large chain dimeric partners within the hexadecamer appears to be associated with oxidative stress and protein turnover.

The protein resides in the plastid. It is found in the chloroplast. The enzyme catalyses 2 (2R)-3-phosphoglycerate + 2 H(+) = D-ribulose 1,5-bisphosphate + CO2 + H2O. It catalyses the reaction D-ribulose 1,5-bisphosphate + O2 = 2-phosphoglycolate + (2R)-3-phosphoglycerate + 2 H(+). Functionally, ruBisCO catalyzes two reactions: the carboxylation of D-ribulose 1,5-bisphosphate, the primary event in carbon dioxide fixation, as well as the oxidative fragmentation of the pentose substrate in the photorespiration process. Both reactions occur simultaneously and in competition at the same active site. The protein is Ribulose bisphosphate carboxylase large chain of Ligustrum vulgare (Common privet).